A 495-amino-acid polypeptide reads, in one-letter code: Autoinducer 2 import ATP-binding protein LsrA (495 aa).

ABC transporter domains lie at 5-233 and 256-494; these read IEAH…TPVS and AQDF…FGGQ. ATP is bound at residue 37–44; sequence GGNGAGKS.

This sequence belongs to the ABC transporter superfamily. AI-2 autoinducer porter (TC 3.A.1.2.8) family. As to quaternary structure, the complex is composed of two ATP-binding proteins (LsrA), two transmembrane proteins (LsrC and LsrD) and a solute-binding protein (LsrB).

It is found in the cell inner membrane. It catalyses the reaction ATP + H2O + (2R,4S)-2-methyl-2,3,3,4-tetrahydroxytetrahydrofuran-[AI-2-binding protein]Side 1 = ADP + phosphate + (2R,4S)-2-methyl-2,3,3,4-tetrahydroxytetrahydrofuranSide 2 + [AI-2-binding protein]Side 1.. Its function is as follows. Part of the ABC transporter complex LsrABCD involved in autoinducer 2 (AI-2) import. Responsible for energy coupling to the transport system. The sequence is that of Autoinducer 2 import ATP-binding protein LsrA (lsrA) from Enterobacter sp. (strain 638).